A 296-amino-acid chain; its full sequence is Bifunctional protein FolD 1 (296 aa).

NADP(+)-binding positions include 167-169 and isoleucine 235; that span reads GCG.

It belongs to the tetrahydrofolate dehydrogenase/cyclohydrolase family. As to quaternary structure, homodimer.

The enzyme catalyses (6R)-5,10-methylene-5,6,7,8-tetrahydrofolate + NADP(+) = (6R)-5,10-methenyltetrahydrofolate + NADPH. The catalysed reaction is (6R)-5,10-methenyltetrahydrofolate + H2O = (6R)-10-formyltetrahydrofolate + H(+). It participates in one-carbon metabolism; tetrahydrofolate interconversion. In terms of biological role, catalyzes the oxidation of 5,10-methylenetetrahydrofolate to 5,10-methenyltetrahydrofolate and then the hydrolysis of 5,10-methenyltetrahydrofolate to 10-formyltetrahydrofolate. The chain is Bifunctional protein FolD 1 from Nocardioides sp. (strain ATCC BAA-499 / JS614).